The following is a 404-amino-acid chain: CD2 homolog (404 aa).

The signal sequence occupies residues 1 to 16 (MFITLIFLSYINIVLS). At 17-225 (NNYWARLNET…QNYFLENIHT (209 aa)) the chain is on the extracellular side. N-linked (GlcNAc...) asparagine; by host glycosylation is found at Asn24, Asn87, Asn92, Asn96, Asn122, Asn139, Asn167, Asn193, Asn200, and Asn206. 2 disulfide bridges follow: Cys140/Cys207 and Cys147/Cys190. The chain crosses the membrane as a helical span at residues 226 to 246 (LFYIIIFIVSGLIASIFISII). Residues 247 to 404 (TFLSLRKRKK…ISLIHVDRII (158 aa)) are Cytoplasmic-facing. Residues 260–295 (EIESPPPESNEEEQCQHDDTTSIHEPSPREPLLPKP) form a disordered region. The span at 273 to 287 (QCQHDDTTSIHEPSP) shows a compositional bias: basic and acidic residues. 7 tandem repeats follow at residues 322 to 327 (NPCPPP), 328 to 333 (KPCPPP), 334 to 339 (KPCPPP), 340 to 345 (KPCPPP), 346 to 351 (KPCPPP), 352 to 357 (KPCPPP), and 358 to 363 (KPCPPP). The 7 X 6 AA tandem repeats of [KN]-P-C-P-P-P stretch occupies residues 322–363 (NPCPPPKPCPPPKPCPPPKPCPPPKPCPPPKPCPPPKPCPPP). A compositionally biased stretch (pro residues) spans 357-388 (PKPCPPPKPCSSPESYSPPKPLPSIPLLPNIP). The interval 357–390 (PKPCPPPKPCSSPESYSPPKPLPSIPLLPNIPPL) is disordered.

This sequence belongs to the asfivirus CD2 homolog protein family. As to quaternary structure, both glycosylated and nonglycosylated forms interact (via C-terminus) with the host AP-1 complex. Cleaved into two fragments of 63 kDa and 26 kDa containing respectively the glycosylated N-terminus and the nonglycosylated C-terminus. A full-length 89-kDa glycosylated form also exists.

It is found in the host membrane. It localises to the virion membrane. The protein resides in the host Golgi apparatus. May play an immunosuppressive role by inhibiting lymphocyte proliferation and subsequently facilitating viral replication and generalization of infection. Responsible for viral hemadsorption, which may help viral spread. Increases virus replication in the tick vector at the step of virus uptake or replication in the tick gut. May play a role in the host Golgi reorganization to yield viral factories. May play a role in host cell penetration. In African swine fever virus (isolate Tick/South Africa/Pretoriuskop Pr4/1996) (ASFV), this protein is CD2 homolog.